A 506-amino-acid polypeptide reads, in one-letter code: NAD(P)H-quinone oxidoreductase subunit 2 (506 aa).

The next 13 helical transmembrane spans lie at 14–34, 42–62, 79–99, 108–128, 132–152, 167–187, 206–226, 240–260, 276–296, 302–322, 330–350, 374–394, and 409–429; these read AIIPEAFILLGIVGTLLVDLA, WAPSICYLSIGSSLLSLTLQW, LAIAFRAIIALSTLVSLLISW, PIGEFAAIVLSATLGAMLLCG, LISVFISLETLSVASYLLSGY, LLVGSAAAAVYLYGSSFLYGL, FITSLALVFVLSTVAFKIAAV, PTPVVAFLSVGSKTAGFAFAI, LLFTILAILSMALGNVVALAQ, MLAYSSIGQAGFVMIGIVSGT, VLYLAAYLFMNLGAFSCVILF, LGLSLCLLSLGGLPPMLGFFG, and LLVIVGLVTSVISIYYYISVI.

This sequence belongs to the complex I subunit 2 family. As to quaternary structure, NDH-1 can be composed of about 15 different subunits; different subcomplexes with different compositions have been identified which probably have different functions.

Its subcellular location is the cellular thylakoid membrane. It carries out the reaction a plastoquinone + NADH + (n+1) H(+)(in) = a plastoquinol + NAD(+) + n H(+)(out). The catalysed reaction is a plastoquinone + NADPH + (n+1) H(+)(in) = a plastoquinol + NADP(+) + n H(+)(out). NDH-1 shuttles electrons from an unknown electron donor, via FMN and iron-sulfur (Fe-S) centers, to quinones in the respiratory and/or the photosynthetic chain. The immediate electron acceptor for the enzyme in this species is believed to be plastoquinone. Couples the redox reaction to proton translocation, and thus conserves the redox energy in a proton gradient. Cyanobacterial NDH-1 also plays a role in inorganic carbon-concentration. In Prochlorococcus marinus (strain MIT 9301), this protein is NAD(P)H-quinone oxidoreductase subunit 2.